Reading from the N-terminus, the 267-residue chain is Endonuclease NucS (267 aa).

This sequence belongs to the NucS endonuclease family.

It localises to the cytoplasm. In terms of biological role, cleaves both 3' and 5' ssDNA extremities of branched DNA structures. The polypeptide is Endonuclease NucS (Pyrococcus furiosus (strain ATCC 43587 / DSM 3638 / JCM 8422 / Vc1)).